The sequence spans 642 residues: 5-aminolevulinate synthase, non-specific, mitochondrial (642 aa).

The transit peptide at 1 to 56 directs the protein to the mitochondrion; the sequence is METVVRRCPFLSRVPQAFLQKAGKSLLFYAQNCPKMMEVGAKPAPRTVSTSAAQCQ. The tract at residues 51 to 109 is disordered; the sequence is SAAQCQQVKETPPANEKEKTAKAAVQQAPDESQMAQTPDGTQLPPGHPSPSTSQSSGSK. A compositionally biased stretch (polar residues) spans 79-90; that stretch reads PDESQMAQTPDG. Low complexity predominate over residues 99–108; that stretch reads SPSTSQSSGS. The substrate site is built by Arg-219, Ser-336, and Lys-355. Residues Ser-388, His-416, and Thr-444 each coordinate pyridoxal 5'-phosphate. Lys-447 is an active-site residue. Lys-447 is subject to N6-(pyridoxal phosphate)lysine. Pyridoxal 5'-phosphate contacts are provided by Thr-476 and Thr-477. Thr-564 serves as a coordination point for substrate. Position 578 is a hydroxyproline (Pro-578).

This sequence belongs to the class-II pyridoxal-phosphate-dependent aminotransferase family. Homodimer. Interacts (hydroxylated form) with VHL. Pyridoxal 5'-phosphate is required as a cofactor. Post-translationally, in normoxia, is hydroxylated at Pro-578, promoting interaction with VHL, initiating ubiquitination and subsequent degradation via the proteasome. In terms of processing, ubiquitinated; in normoxia following hydroxylation and interaction with VHL, leading to its subsequent degradation via the proteasome. As to expression, expressed in the liver, kidney, brain and testis.

It localises to the mitochondrion inner membrane. It catalyses the reaction succinyl-CoA + glycine + H(+) = 5-aminolevulinate + CO2 + CoA. Its pathway is porphyrin-containing compound metabolism; protoporphyrin-IX biosynthesis; 5-aminolevulinate from glycine: step 1/1. Its function is as follows. Catalyzes the pyridoxal 5'-phosphate (PLP)-dependent condensation of succinyl-CoA and glycine to form aminolevulinic acid (ALA), with CoA and CO2 as by-products. This is 5-aminolevulinate synthase, non-specific, mitochondrial (Alas1) from Rattus norvegicus (Rat).